Reading from the N-terminus, the 334-residue chain is MNIKEQIINLPKVELHCHLDGSLRPETVLDLCLKENINIPYENPEDFKSSLKISKNCSSLKEYLEKFYFPIRVMQKKENIYRVTMELLEDSKKDGIEYTEIRFAPFQHTEQDLNENDVVEAALEALQDGESKLGIHSNLILCSLRHDPVERSIDLVNLANSYNEGVCAVDLAGNESDFPPELHKEAFDLAYDNGIKITIHAGETGIAENILKSIKLLHADRIGHGIFAYKSEEILQYVIENQVPLEMCPKSNVDTKAVKNYKNHPFKKYFDLGVKVTLNTDNRTVSNVSLVDEYLNLANIFDFGIEEIKTVIRNGISASFATEEFKVNLLKKLD.

Zn(2+) is bound by residues H16 and H18. Substrate-binding residues include H18, D20, and G173. H200 lines the Zn(2+) pocket. The active-site Proton donor is E203. D281 provides a ligand contact to Zn(2+).

Belongs to the metallo-dependent hydrolases superfamily. Adenosine and AMP deaminases family. Adenosine deaminase subfamily. It depends on Zn(2+) as a cofactor.

It catalyses the reaction adenosine + H2O + H(+) = inosine + NH4(+). The catalysed reaction is 2'-deoxyadenosine + H2O + H(+) = 2'-deoxyinosine + NH4(+). Functionally, catalyzes the hydrolytic deamination of adenosine and 2-deoxyadenosine. This chain is Adenosine deaminase, found in Clostridium acetobutylicum (strain ATCC 824 / DSM 792 / JCM 1419 / IAM 19013 / LMG 5710 / NBRC 13948 / NRRL B-527 / VKM B-1787 / 2291 / W).